The chain runs to 94 residues: Small ribosomal subunit protein uS19 (94 aa).

Belongs to the universal ribosomal protein uS19 family.

In terms of biological role, protein S19 forms a complex with S13 that binds strongly to the 16S ribosomal RNA. This Endomicrobium trichonymphae protein is Small ribosomal subunit protein uS19.